Consider the following 442-residue polypeptide: Histidine--tRNA ligase (442 aa).

It belongs to the class-II aminoacyl-tRNA synthetase family. Homodimer.

The protein localises to the cytoplasm. It carries out the reaction tRNA(His) + L-histidine + ATP = L-histidyl-tRNA(His) + AMP + diphosphate + H(+). This Helicobacter pylori (strain ATCC 700392 / 26695) (Campylobacter pylori) protein is Histidine--tRNA ligase (hisS).